The primary structure comprises 714 residues: Interferon-induced GTP-binding protein Mx2 (714 aa).

The segment at 1–89 (MSMSYRALKF…QRSKGSENNL (89 aa)) is disordered. Polar residues-rich tracts occupy residues 61–70 (NNFNQLNLDP) and 79–88 (QQRSKGSENN). A Dynamin-type G domain is found at 115–386 (DLALPAIAVI…LIWHINKSLP (272 aa)). Positions 125-132 (GDQSSGKS) are G1 motif. 125–132 (GDQSSGKS) contributes to the GTP binding site. The segment at 150–152 (ITR) is G2 motif. Residues 224 to 227 (DLPG) are G3 motif. GTP-binding positions include 224–228 (DLPGI) and 293–296 (TKPD). Residues 293 to 296 (TKPD) are G4 motif. The segment at 325–328 (KCRG) is G5 motif. The region spanning 622 to 713 (IVEIGVHLNA…ALYEFPHFKS (92 aa)) is the GED domain.

Belongs to the TRAFAC class dynamin-like GTPase superfamily. Dynamin/Fzo/YdjA family.

The protein localises to the cytoplasm. It localises to the nucleus. Interferon-induced dynamin-like GTPase with antiviral activity. The chain is Interferon-induced GTP-binding protein Mx2 (MX2) from Ovis aries (Sheep).